Reading from the N-terminus, the 909-residue chain is Protein translocase subunit SecA (909 aa).

Residues Gln87, 105–109, and Asp513 each bind ATP; that span reads GEGKT. Residues 834-909 form a disordered region; it reads QEEVERMEEQ…KYKQCHGKID (76 aa). Over residues 836–853 the composition is skewed to basic and acidic residues; that stretch reads EVERMEEQRRAQAEEAAR. The span at 854 to 863 shows a compositional bias: low complexity; the sequence is RAQAQHAAAQ. Over residues 874-889 the composition is skewed to basic and acidic residues; sequence EGAHQPMVREERKVGR. Positions 893, 895, 904, and 905 each coordinate Zn(2+). A compositionally biased stretch (basic residues) spans 899 to 909; sequence KKYKQCHGKID.

Belongs to the SecA family. Monomer and homodimer. Part of the essential Sec protein translocation apparatus which comprises SecA, SecYEG and auxiliary proteins SecDF-YajC and YidC. The cofactor is Zn(2+).

It is found in the cell inner membrane. Its subcellular location is the cytoplasm. It carries out the reaction ATP + H2O + cellular proteinSide 1 = ADP + phosphate + cellular proteinSide 2.. In terms of biological role, part of the Sec protein translocase complex. Interacts with the SecYEG preprotein conducting channel. Has a central role in coupling the hydrolysis of ATP to the transfer of proteins into and across the cell membrane, serving both as a receptor for the preprotein-SecB complex and as an ATP-driven molecular motor driving the stepwise translocation of polypeptide chains across the membrane. The polypeptide is Protein translocase subunit SecA (Vibrio campbellii (strain ATCC BAA-1116)).